A 701-amino-acid chain; its full sequence is Elongation factor G (701 aa).

In terms of domain architecture, tr-type G spans 10–286 (NKVRNIGIMA…AVIDYLPSPL (277 aa)). GTP contacts are provided by residues 19-26 (AHIDAGKT), 83-87 (DTPGH), and 137-140 (NKMD).

The protein belongs to the TRAFAC class translation factor GTPase superfamily. Classic translation factor GTPase family. EF-G/EF-2 subfamily.

It localises to the cytoplasm. Its function is as follows. Catalyzes the GTP-dependent ribosomal translocation step during translation elongation. During this step, the ribosome changes from the pre-translocational (PRE) to the post-translocational (POST) state as the newly formed A-site-bound peptidyl-tRNA and P-site-bound deacylated tRNA move to the P and E sites, respectively. Catalyzes the coordinated movement of the two tRNA molecules, the mRNA and conformational changes in the ribosome. This Mycobacteroides abscessus (strain ATCC 19977 / DSM 44196 / CCUG 20993 / CIP 104536 / JCM 13569 / NCTC 13031 / TMC 1543 / L948) (Mycobacterium abscessus) protein is Elongation factor G.